We begin with the raw amino-acid sequence, 500 residues long: tRNA modification GTPase MnmE (500 aa).

(6S)-5-formyl-5,6,7,8-tetrahydrofolate contacts are provided by arginine 24, glutamate 120, and lysine 159. Residues 256 to 420 enclose the TrmE-type G domain; that stretch reads GIPVAIIGET…LEKKLVQAAA (165 aa). Asparagine 266 lines the K(+) pocket. GTP is bound by residues 266–271, 285–291, and 310–313; these read NAGKST, SDIHGTT, and DTAG. Serine 270 provides a ligand contact to Mg(2+). Positions 285, 287, and 290 each coordinate K(+). A Mg(2+)-binding site is contributed by threonine 291. Lysine 500 provides a ligand contact to (6S)-5-formyl-5,6,7,8-tetrahydrofolate.

It belongs to the TRAFAC class TrmE-Era-EngA-EngB-Septin-like GTPase superfamily. TrmE GTPase family. Homodimer. Heterotetramer of two MnmE and two MnmG subunits. K(+) serves as cofactor.

Its subcellular location is the cytoplasm. In terms of biological role, exhibits a very high intrinsic GTPase hydrolysis rate. Involved in the addition of a carboxymethylaminomethyl (cmnm) group at the wobble position (U34) of certain tRNAs, forming tRNA-cmnm(5)s(2)U34. The sequence is that of tRNA modification GTPase MnmE from Phocaeicola vulgatus (strain ATCC 8482 / DSM 1447 / JCM 5826 / CCUG 4940 / NBRC 14291 / NCTC 11154) (Bacteroides vulgatus).